A 444-amino-acid chain; its full sequence is Ubiquitin carboxyl-terminal hydrolase MINDY-3 (444 aa).

The active-site Nucleophile is cysteine 51. Residue serine 124 is modified to Phosphoserine. Residue histidine 286 is the Proton acceptor of the active site.

The protein belongs to the MINDY deubiquitinase family. FAM188 subfamily. Interacts with COPS5.

The protein localises to the nucleus. It catalyses the reaction Thiol-dependent hydrolysis of ester, thioester, amide, peptide and isopeptide bonds formed by the C-terminal Gly of ubiquitin (a 76-residue protein attached to proteins as an intracellular targeting signal).. Functionally, hydrolase that can remove 'Lys-48'-linked conjugated ubiquitin from proteins. The chain is Ubiquitin carboxyl-terminal hydrolase MINDY-3 from Mus musculus (Mouse).